The sequence spans 298 residues: Lipoyl synthase (298 aa).

[4Fe-4S] cluster-binding residues include cysteine 43, cysteine 48, cysteine 54, cysteine 69, cysteine 73, cysteine 76, and serine 280. The Radical SAM core domain maps to 55-269; it reads FSSGTATFLI…AACGRGMGIP (215 aa).

It belongs to the radical SAM superfamily. Lipoyl synthase family. [4Fe-4S] cluster is required as a cofactor.

The protein localises to the cytoplasm. It carries out the reaction [[Fe-S] cluster scaffold protein carrying a second [4Fe-4S](2+) cluster] + N(6)-octanoyl-L-lysyl-[protein] + 2 oxidized [2Fe-2S]-[ferredoxin] + 2 S-adenosyl-L-methionine + 4 H(+) = [[Fe-S] cluster scaffold protein] + N(6)-[(R)-dihydrolipoyl]-L-lysyl-[protein] + 4 Fe(3+) + 2 hydrogen sulfide + 2 5'-deoxyadenosine + 2 L-methionine + 2 reduced [2Fe-2S]-[ferredoxin]. It functions in the pathway protein modification; protein lipoylation via endogenous pathway; protein N(6)-(lipoyl)lysine from octanoyl-[acyl-carrier-protein]: step 2/2. Catalyzes the radical-mediated insertion of two sulfur atoms into the C-6 and C-8 positions of the octanoyl moiety bound to the lipoyl domains of lipoate-dependent enzymes, thereby converting the octanoylated domains into lipoylated derivatives. The sequence is that of Lipoyl synthase from Nitratidesulfovibrio vulgaris (strain ATCC 29579 / DSM 644 / CCUG 34227 / NCIMB 8303 / VKM B-1760 / Hildenborough) (Desulfovibrio vulgaris).